We begin with the raw amino-acid sequence, 429 residues long: Adenylosuccinate synthetase (429 aa).

GTP-binding positions include 13–19 (GDEGKGK) and 41–43 (GHT). Asp-14 acts as the Proton acceptor in catalysis. Residues Asp-14 and Gly-41 each contribute to the Mg(2+) site. IMP is bound by residues 14–17 (DEGK), 39–42 (NAGH), Thr-130, Arg-144, Gln-225, Thr-240, and Arg-304. The Proton donor role is filled by His-42. A substrate-binding site is contributed by 300–306 (ATTGRRR). GTP contacts are provided by residues Arg-306, 332-334 (KLD), and 417-419 (STG).

It belongs to the adenylosuccinate synthetase family. In terms of assembly, homodimer. It depends on Mg(2+) as a cofactor.

It is found in the cytoplasm. It catalyses the reaction IMP + L-aspartate + GTP = N(6)-(1,2-dicarboxyethyl)-AMP + GDP + phosphate + 2 H(+). It functions in the pathway purine metabolism; AMP biosynthesis via de novo pathway; AMP from IMP: step 1/2. Functionally, plays an important role in the de novo pathway of purine nucleotide biosynthesis. Catalyzes the first committed step in the biosynthesis of AMP from IMP. The protein is Adenylosuccinate synthetase of Buchnera aphidicola subsp. Baizongia pistaciae (strain Bp).